We begin with the raw amino-acid sequence, 428 residues long: Arginine biosynthesis bifunctional protein ArgJ, mitochondrial (428 aa).

Substrate is bound by residues threonine 171, lysine 197, threonine 208, glutamate 294, asparagine 423, and serine 428. Residue threonine 208 is the Nucleophile of the active site.

Belongs to the ArgJ family. Heterodimer of an alpha and a beta chain. In terms of processing, the alpha and beta chains are autoproteolytically processed from a single precursor protein within the mitochondrion.

The protein resides in the mitochondrion matrix. It catalyses the reaction N(2)-acetyl-L-ornithine + L-glutamate = N-acetyl-L-glutamate + L-ornithine. The catalysed reaction is L-glutamate + acetyl-CoA = N-acetyl-L-glutamate + CoA + H(+). Its pathway is amino-acid biosynthesis; L-arginine biosynthesis; L-ornithine and N-acetyl-L-glutamate from L-glutamate and N(2)-acetyl-L-ornithine (cyclic): step 1/1. It functions in the pathway amino-acid biosynthesis; L-arginine biosynthesis; N(2)-acetyl-L-ornithine from L-glutamate: step 1/4. In terms of biological role, catalyzes two activities which are involved in the cyclic version of arginine biosynthesis: the synthesis of acetylglutamate from glutamate and acetyl-CoA, and of ornithine by transacetylation between acetylornithine and glutamate. This is Arginine biosynthesis bifunctional protein ArgJ, mitochondrial from Komagataella phaffii (strain GS115 / ATCC 20864) (Yeast).